The following is an 869-amino-acid chain: NACHT, LRR and PYD domains-containing protein 6 (869 aa).

The region spanning 37–128 is the Pyrin domain; that stretch reads KLRDAPLDGR…REHVLRQHAK (92 aa). The region spanning 194–511 is the NACHT domain; sequence LTVVLQGPAG…EFLAALSYLL (318 aa). 200–207 lines the ATP pocket; it reads GPAGIGKT. The tract at residues 350 to 354 is disordered; it reads KDKKK. The stretch at 460-485 is one LRR 1 repeat; that stretch reads EEDLEKLKLRGSQVQTIFLNKKEIPG. The segment at 577–608 is disordered; the sequence is VQGQSHPKGPPVGAKKTAELEDIEDAEEEEEE. A compositionally biased stretch (acidic residues) spans 596–608; it reads LEDIEDAEEEEEE. LRR repeat units follow at residues 635–658 and 837–860; these read LSSL…VLNY and TLSL…KTSK.

This sequence belongs to the NLRP family. In terms of assembly, homomultimer; forms the NLRP6 inflammasome polymeric complex, a filament composed of homopolymers in response to pathogens and other damage-associated signals. The core of NLRP6 inflammasomes consists of a signal sensor component (NLRP6), an adapter (PYCARD/ASC), which recruits effector pro-inflammatory caspases (CASP1 and CASP4). Interacts (via pyrin domain) with PYCARD/ASC (via pyrin domain); interaction takes place following NLRP6 activation and formation of liquid-liquid phase separation (LLPS), initiating nucleation which greatly enhances further addition of soluble PYCARD/ASC molecules to the speck in a prion-like polymerization process. Clustered PYCARD/ASC nucleates the formation of CASP1 (or possibly CASP4) filaments through the interaction of their respective CARD domains, acting as a platform for CASP1 polymerization. CASP1 filament formation increases local enzyme concentration, resulting in trans-autocleavage and activation. Active CASP1 then processes IL1B and IL18 precursors, leading to the release of mature cytokines in the extracellular milieu and inflammatory response. Interacts with DHX15. In terms of processing, polyubiquitinated with 'Lys-63'-linked chains, promoting the interaction with PYCARD/ASC and formation of the NLRP6 inflammasome. Deubiquitination by CYLD decreases the interaction with PYCARD/ASC. As to expression, highly expressed in the gastrointestinal tract, predominantly in colonic myofibroblasts and in colonic epithelial and endothelial cells. Within the intestinal mucosa, highly expressed by goblet cells. Also expressed in hepatocytes and in immune cells, including CD4(+) and CD8(+) T-cells, dendritic cells, mastocytes and peritoneal macrophages, as well as in lung, kidney, bladder and gonads.

It localises to the cytoplasm. The protein localises to the inflammasome. Its subcellular location is the cell membrane. The protein resides in the nucleus membrane. Acts as the sensor component of the NLRP6 inflammasome, which mediates inflammasome activation in response to various pathogen-associated signals, leading to maturation and secretion of IL1B and IL18. Inflammasomes are supramolecular complexes that assemble in the cytosol in response to pathogens and other damage-associated signals and play critical roles in innate immunity and inflammation. Acts as a recognition receptor (PRR): recognizes and binds specific pathogens and other damage-associated signals, such as lipoteichoic acid (LTA), a cell-wall component of Gram-positive bacteria, or double stranded RNA (dsRNA). May also recognize and bind lipopolysaccharide (LPS), a major component of the outer membrane of Gram-negative bacteria; however, LPS is probably not a major activator of the NLRP6 inflammasome. Following LTA- or dsRNA-binding, NLRP6 undergoes liquid-liquid phase separation (LLPS), enhancing multivalent interactions, an essential step for the formation of the NLRP6 inflammasome polymeric complex. The NLRP6 inflammasome acts by promoting recruitment of effector pro-inflammatory caspases (CASP1 and/or CASP4) that catalyze maturation and secretion of IL1B and IL18 in the extracellular milieu. The NLRP6 inflammasome plays a central role in the maintenance of epithelial integrity and host defense against microbial infections in the intestine. Required to restrict infection against Gram-positive bacteria by recognizing lipoteichoic acid (LTA), leading to recruitment of CASP4 and CASP1, and subsequent maturation and secretion of IL1B and IL18. Involved in intestinal antiviral innate immunity together with DHX15: recognizes and binds viral dsRNA to restrict infection by enteric viruses through the interferon pathway and GSDMD-dependent release of IL18. Required to prevent infection by the apicomplexan parasite C.tyzzeri in enterocytes by promoting GSDMD-dependent release of IL18. The NLRP6 inflammasome may also regulate the gut microbiota composition by acting as a sensor of microbiota-associated metabolites to form a PYCARD/ASC-dependent inflammasome for downstream IL18 release and secretion of antimicrobial peptides. Its role in the regulation of the gut microbiota composition is however subject to discussion. Essential for gut mucosal self-renewal and proliferation. Regulate mucus secretion in an inflammasome- and autophagy-dependent manner to prevent invasion by enteric bacteria. During systemic bacterial infections, the NLRP6 inflammasome negatively regulates neutrophil recruitment and neutrophil extracellular traps (NETs) formation. May promote peripheral nerve recovery following injury via an inflammasome-independent mechanism. The polypeptide is NACHT, LRR and PYD domains-containing protein 6 (Mus musculus (Mouse)).